Reading from the N-terminus, the 337-residue chain is Putative 2-aminoethylphosphonate-binding periplasmic protein (337 aa).

An N-terminal signal peptide occupies residues 1–21; sequence MKLSRLALLSVFALASAPSWA.

The protein belongs to the bacterial solute-binding protein 1 family.

The protein resides in the periplasm. Its function is as follows. Probably part of the PhnSTUV complex (TC 3.A.1.11.5) involved in 2-aminoethylphosphonate import. The protein is Putative 2-aminoethylphosphonate-binding periplasmic protein (phnS) of Salmonella paratyphi A (strain ATCC 9150 / SARB42).